The primary structure comprises 197 residues: MAERKAEVTRNTLETQITCKINLDGSGQARFETGVPFLDHMLDQVARHGLIDMDIVAKGDLHIDAHHTVEDIGITLGQAVAKALGDKKGIRRYGHSYVPLDEALSRVVIDFSGRPGLEMHVEFTRSMIGQFDVDLFYEFFQGFVNHAQVTLHIDNLRGRNSHHQIETVFKAFGRALRMALELDPRMAGIMPSTKGAL.

The protein belongs to the imidazoleglycerol-phosphate dehydratase family.

Its subcellular location is the cytoplasm. The catalysed reaction is D-erythro-1-(imidazol-4-yl)glycerol 3-phosphate = 3-(imidazol-4-yl)-2-oxopropyl phosphate + H2O. It participates in amino-acid biosynthesis; L-histidine biosynthesis; L-histidine from 5-phospho-alpha-D-ribose 1-diphosphate: step 6/9. The chain is Imidazoleglycerol-phosphate dehydratase from Hahella chejuensis (strain KCTC 2396).